A 144-amino-acid chain; its full sequence is Large ribosomal subunit protein uL15 (144 aa).

Residues 1 to 48 form a disordered region; that stretch reads MIKLESLQDPSPRKRRTKLLGRGPSSGHGKTSCRGHKGDGSRSGYKRR.

The protein belongs to the universal ribosomal protein uL15 family. In terms of assembly, part of the 50S ribosomal subunit.

In terms of biological role, binds to the 23S rRNA. This chain is Large ribosomal subunit protein uL15, found in Chlamydia caviae (strain ATCC VR-813 / DSM 19441 / 03DC25 / GPIC) (Chlamydophila caviae).